The primary structure comprises 127 residues: MRPLDIVELAEPEEVEVLEPEEDFEQFLLPVINEMREDIAALSREHGRAYLRNRSKLWEMDNMLIQIKTQVEASEESALNHLQNPDDGAEGRGTKRCEKAEEKAKEIAKMAEMLVELVRRIEKSESS.

Residues 76–97 form a disordered region; that stretch reads ESALNHLQNPDDGAEGRGTKRC. Residues 92–126 are a coiled coil; it reads RGTKRCEKAEEKAKEIAKMAEMLVELVRRIEKSES.

This sequence belongs to the MORF4 family-associated protein family. In terms of assembly, found in a complex composed of MORF4L1, MRFAP1 and RB1. Interacts via its N-terminus with MORF4L1. Interacts with CSTB and MORF4L2.

The protein localises to the nucleus. It localises to the cytoplasm. The protein resides in the perinuclear region. In Bos taurus (Bovine), this protein is MORF4 family-associated protein 1.